A 103-amino-acid polypeptide reads, in one-letter code: Large ribosomal subunit protein bL21 (103 aa).

Belongs to the bacterial ribosomal protein bL21 family. In terms of assembly, part of the 50S ribosomal subunit. Contacts protein L20.

In terms of biological role, this protein binds to 23S rRNA in the presence of protein L20. The chain is Large ribosomal subunit protein bL21 from Salmonella paratyphi A (strain ATCC 9150 / SARB42).